A 199-amino-acid chain; its full sequence is Recombination protein RecR (199 aa).

A C4-type zinc finger spans residues 58 to 73 (CSVCYGLADSDPCHIC). The region spanning 81 to 176 (DVVCVVEQGT…KITRIASGVP (96 aa)) is the Toprim domain.

It belongs to the RecR family.

May play a role in DNA repair. It seems to be involved in an RecBC-independent recombinational process of DNA repair. It may act with RecF and RecO. The protein is Recombination protein RecR of Desulfatibacillum aliphaticivorans.